A 388-amino-acid polypeptide reads, in one-letter code: Putative nickel insertion protein (388 aa).

This sequence belongs to the LarC family.

In Geobacter sulfurreducens (strain ATCC 51573 / DSM 12127 / PCA), this protein is Putative nickel insertion protein.